The chain runs to 280 residues: 4-deoxy-L-threo-5-hexosulose-uronate ketol-isomerase 1 (280 aa).

4 residues coordinate Zn(2+): H198, H200, E205, and H247.

The protein belongs to the KduI family. It depends on Zn(2+) as a cofactor.

It carries out the reaction 5-dehydro-4-deoxy-D-glucuronate = 3-deoxy-D-glycero-2,5-hexodiulosonate. The protein operates within glycan metabolism; pectin degradation; 2-dehydro-3-deoxy-D-gluconate from pectin: step 4/5. Its function is as follows. Catalyzes the isomerization of 5-dehydro-4-deoxy-D-glucuronate to 3-deoxy-D-glycero-2,5-hexodiulosonate. The sequence is that of 4-deoxy-L-threo-5-hexosulose-uronate ketol-isomerase 1 (kduI1) from Bacteroides thetaiotaomicron (strain ATCC 29148 / DSM 2079 / JCM 5827 / CCUG 10774 / NCTC 10582 / VPI-5482 / E50).